The primary structure comprises 113 residues: Nucleoid-associated protein P9303_00241 (113 aa).

The interval 90–113 (TTTMKEQMEELTGGLNLNLPGMSD) is disordered.

It belongs to the YbaB/EbfC family. Homodimer.

The protein resides in the cytoplasm. The protein localises to the nucleoid. Functionally, binds to DNA and alters its conformation. May be involved in regulation of gene expression, nucleoid organization and DNA protection. This chain is Nucleoid-associated protein P9303_00241, found in Prochlorococcus marinus (strain MIT 9303).